The sequence spans 961 residues: Glycine dehydrogenase (decarboxylating) (961 aa).

Lys709 carries the N6-(pyridoxal phosphate)lysine modification.

Belongs to the GcvP family. The glycine cleavage system is composed of four proteins: P, T, L and H. The cofactor is pyridoxal 5'-phosphate.

The enzyme catalyses N(6)-[(R)-lipoyl]-L-lysyl-[glycine-cleavage complex H protein] + glycine + H(+) = N(6)-[(R)-S(8)-aminomethyldihydrolipoyl]-L-lysyl-[glycine-cleavage complex H protein] + CO2. Functionally, the glycine cleavage system catalyzes the degradation of glycine. The P protein binds the alpha-amino group of glycine through its pyridoxal phosphate cofactor; CO(2) is released and the remaining methylamine moiety is then transferred to the lipoamide cofactor of the H protein. The chain is Glycine dehydrogenase (decarboxylating) from Streptomyces avermitilis (strain ATCC 31267 / DSM 46492 / JCM 5070 / NBRC 14893 / NCIMB 12804 / NRRL 8165 / MA-4680).